A 338-amino-acid polypeptide reads, in one-letter code: Ketol-acid reductoisomerase (NADP(+)) (338 aa).

The KARI N-terminal Rossmann domain maps to 1-181 (MNVFYDKDAD…GGGRAGIIET (181 aa)). NADP(+) contacts are provided by residues 24–27 (YGSQ), Arg47, and Ser52. The active site involves His107. Gly133 serves as a coordination point for NADP(+). The 146-residue stretch at 182–327 (NFREETETDL…AKLRAMMPWI (146 aa)) folds into the KARI C-terminal knotted domain. Positions 190, 194, 226, and 230 each coordinate Mg(2+). Ser251 provides a ligand contact to substrate.

Belongs to the ketol-acid reductoisomerase family. Mg(2+) serves as cofactor.

It carries out the reaction (2R)-2,3-dihydroxy-3-methylbutanoate + NADP(+) = (2S)-2-acetolactate + NADPH + H(+). It catalyses the reaction (2R,3R)-2,3-dihydroxy-3-methylpentanoate + NADP(+) = (S)-2-ethyl-2-hydroxy-3-oxobutanoate + NADPH + H(+). The protein operates within amino-acid biosynthesis; L-isoleucine biosynthesis; L-isoleucine from 2-oxobutanoate: step 2/4. It participates in amino-acid biosynthesis; L-valine biosynthesis; L-valine from pyruvate: step 2/4. Its function is as follows. Involved in the biosynthesis of branched-chain amino acids (BCAA). Catalyzes an alkyl-migration followed by a ketol-acid reduction of (S)-2-acetolactate (S2AL) to yield (R)-2,3-dihydroxy-isovalerate. In the isomerase reaction, S2AL is rearranged via a Mg-dependent methyl migration to produce 3-hydroxy-3-methyl-2-ketobutyrate (HMKB). In the reductase reaction, this 2-ketoacid undergoes a metal-dependent reduction by NADPH to yield (R)-2,3-dihydroxy-isovalerate. This is Ketol-acid reductoisomerase (NADP(+)) from Burkholderia multivorans (strain ATCC 17616 / 249).